A 758-amino-acid polypeptide reads, in one-letter code: Maturase-like protein 2 (758 aa).

Its subcellular location is the plastid. It localises to the chloroplast. This chain is Maturase-like protein 2 (mat2), found in Euglena gracilis.